We begin with the raw amino-acid sequence, 143 residues long: UPF0763 protein HH_0976 (143 aa).

This sequence belongs to the UPF0763 family.

The polypeptide is UPF0763 protein HH_0976 (Helicobacter hepaticus (strain ATCC 51449 / 3B1)).